A 245-amino-acid polypeptide reads, in one-letter code: Orotidine 5'-phosphate decarboxylase (245 aa).

Residues D22, K44, 71–80 (DLKFHDIPNT), T131, R192, Q201, G221, and R222 contribute to the substrate site. The Proton donor role is filled by K73.

It belongs to the OMP decarboxylase family. Type 1 subfamily. Homodimer.

The enzyme catalyses orotidine 5'-phosphate + H(+) = UMP + CO2. The protein operates within pyrimidine metabolism; UMP biosynthesis via de novo pathway; UMP from orotate: step 2/2. Its function is as follows. Catalyzes the decarboxylation of orotidine 5'-monophosphate (OMP) to uridine 5'-monophosphate (UMP). The chain is Orotidine 5'-phosphate decarboxylase from Salmonella choleraesuis (strain SC-B67).